The primary structure comprises 197 residues: Probable GTP-binding protein EngB (197 aa).

The region spanning 25 to 197 (SAPEIAFAGR…VRDEFFKFTR (173 aa)) is the EngB-type G domain. Residues 33-40 (GRSNVGKS), 60-64 (GCTRQ), 79-82 (DLPG), 146-149 (TKID), and 177-179 (ISV) each bind GTP. The Mg(2+) site is built by S40 and T62.

Belongs to the TRAFAC class TrmE-Era-EngA-EngB-Septin-like GTPase superfamily. EngB GTPase family. The cofactor is Mg(2+).

Its function is as follows. Necessary for normal cell division and for the maintenance of normal septation. In Wolbachia sp. subsp. Brugia malayi (strain TRS), this protein is Probable GTP-binding protein EngB.